Reading from the N-terminus, the 453-residue chain is UDP-N-acetylmuramate--L-alanyl-gamma-D-glutamyl-meso-2,6-diaminoheptandioate ligase (453 aa).

111-117 (GTHGKTT) is a binding site for ATP.

It belongs to the MurCDEF family. Mpl subfamily. It depends on Mg(2+) as a cofactor.

The enzyme catalyses UDP-N-acetyl-alpha-D-muramate + L-alanyl-gamma-D-glutamyl-meso-2,6-diaminopimelate + ATP = UDP-N-acetyl-alpha-D-muramoyl-L-alanyl-gamma-D-glutamyl-meso-2,6-diaminopimelate + ADP + phosphate + H(+). Its pathway is cell wall biogenesis; peptidoglycan recycling. Reutilizes the intact tripeptide L-alanyl-gamma-D-glutamyl-meso-diaminopimelate by linking it to UDP-N-acetylmuramate. The chain is UDP-N-acetylmuramate--L-alanyl-gamma-D-glutamyl-meso-2,6-diaminoheptandioate ligase from Haemophilus influenzae (strain ATCC 51907 / DSM 11121 / KW20 / Rd).